A 473-amino-acid polypeptide reads, in one-letter code: 3-isopropylmalate dehydratase large subunit (473 aa).

[4Fe-4S] cluster-binding residues include Cys348, Cys408, and Cys411. The interval 421-440 is disordered; it reads GDEASASSSNRNFIGRQGSK.

The protein belongs to the aconitase/IPM isomerase family. LeuC type 1 subfamily. In terms of assembly, heterodimer of LeuC and LeuD. It depends on [4Fe-4S] cluster as a cofactor.

The catalysed reaction is (2R,3S)-3-isopropylmalate = (2S)-2-isopropylmalate. The protein operates within amino-acid biosynthesis; L-leucine biosynthesis; L-leucine from 3-methyl-2-oxobutanoate: step 2/4. Catalyzes the isomerization between 2-isopropylmalate and 3-isopropylmalate, via the formation of 2-isopropylmaleate. This chain is 3-isopropylmalate dehydratase large subunit, found in Haloferax volcanii (strain ATCC 29605 / DSM 3757 / JCM 8879 / NBRC 14742 / NCIMB 2012 / VKM B-1768 / DS2) (Halobacterium volcanii).